A 247-amino-acid chain; its full sequence is Proteasome subunit alpha type-7-B (247 aa).

This sequence belongs to the peptidase T1A family. As to quaternary structure, the 26S proteasome consists of a 20S proteasome core and two 19S regulatory subunits. The 20S proteasome core is composed of 28 subunits that are arranged in four stacked rings, resulting in a barrel-shaped structure. The two end rings are each formed by seven alpha subunits, and the two central rings are each formed by seven beta subunits. The catalytic chamber with the active sites is on the inside of the barrel. In terms of processing, phosphorylated in G2 phase.

The protein localises to the cytoplasm. Its subcellular location is the nucleus. Its function is as follows. The proteasome is a multicatalytic proteinase complex which is characterized by its ability to cleave peptides with Arg, Phe, Tyr, Leu, and Glu adjacent to the leaving group at neutral or slightly basic pH. The proteasome has an ATP-dependent proteolytic activity. The protein is Proteasome subunit alpha type-7-B (psma7-b) of Xenopus laevis (African clawed frog).